We begin with the raw amino-acid sequence, 493 residues long: Galactose-1-phosphate uridylyltransferase (493 aa).

The protein belongs to the galactose-1-phosphate uridylyltransferase type 2 family.

The protein resides in the cytoplasm. The enzyme catalyses alpha-D-galactose 1-phosphate + UDP-alpha-D-glucose = alpha-D-glucose 1-phosphate + UDP-alpha-D-galactose. It functions in the pathway carbohydrate metabolism; galactose metabolism. The protein is Galactose-1-phosphate uridylyltransferase of Lactococcus lactis subsp. cremoris (strain SK11).